Consider the following 461-residue polypeptide: UDP-glucose 6-dehydrogenase TuaD (461 aa).

NAD(+)-binding positions include 3 to 20, valine 12, aspartate 31, lysine 36, threonine 122, and glutamate 156; that span reads KIAV…GTCF. Substrate contacts are provided by residues 152-156, lysine 205, asparagine 209, 250-254, and glycine 258; these read EFLRE and FLKAG. The active-site Nucleophile is the cysteine 261. Position 264 (lysine 264) interacts with NAD(+). Substrate is bound at residue lysine 321. Arginine 328 contacts NAD(+).

The protein belongs to the UDP-glucose/GDP-mannose dehydrogenase family. Phosphorylated by YwqD and dephosphorylated by YwqE in vitro.

Its subcellular location is the cytoplasm. It catalyses the reaction UDP-alpha-D-glucose + 2 NAD(+) + H2O = UDP-alpha-D-glucuronate + 2 NADH + 3 H(+). It functions in the pathway nucleotide-sugar biosynthesis; UDP-alpha-D-glucuronate biosynthesis; UDP-alpha-D-glucuronate from UDP-alpha-D-glucose: step 1/1. With respect to regulation, activated by phosphorylation; inhibited by dephosphorylation. Its function is as follows. Catalyzes the conversion of UDP-glucose into UDP-glucuronate, one of the precursors of teichuronic acid. This chain is UDP-glucose 6-dehydrogenase TuaD (tuaD), found in Bacillus subtilis (strain 168).